The chain runs to 551 residues: Glucose-6-phosphate isomerase (551 aa).

The Proton donor role is filled by E352. Catalysis depends on residues H383 and K511.

Belongs to the GPI family.

The protein resides in the cytoplasm. The enzyme catalyses alpha-D-glucose 6-phosphate = beta-D-fructose 6-phosphate. It functions in the pathway carbohydrate biosynthesis; gluconeogenesis. The protein operates within carbohydrate degradation; glycolysis; D-glyceraldehyde 3-phosphate and glycerone phosphate from D-glucose: step 2/4. Its function is as follows. Catalyzes the reversible isomerization of glucose-6-phosphate to fructose-6-phosphate. The polypeptide is Glucose-6-phosphate isomerase (Chlorobium luteolum (strain DSM 273 / BCRC 81028 / 2530) (Pelodictyon luteolum)).